Here is a 320-residue protein sequence, read N- to C-terminus: L-lactate dehydrogenase 1 (320 aa).

NAD(+)-binding positions include valine 18, aspartate 39, arginine 44, tyrosine 69, and 83–84 (GA). Residues glutamine 86 and arginine 92 each coordinate substrate. Residues serine 105, 122–124 (AAN), and serine 147 each bind NAD(+). A substrate-binding site is contributed by 124–127 (NPVD). 152–155 (DSSR) lines the substrate pocket. The active-site Proton acceptor is histidine 179. Tyrosine 223 carries the phosphotyrosine modification. Threonine 232 serves as a coordination point for substrate.

It belongs to the LDH/MDH superfamily. LDH family. In terms of assembly, homotetramer.

It localises to the cytoplasm. The catalysed reaction is (S)-lactate + NAD(+) = pyruvate + NADH + H(+). It functions in the pathway fermentation; pyruvate fermentation to lactate; (S)-lactate from pyruvate: step 1/1. Catalyzes the conversion of lactate to pyruvate. The sequence is that of L-lactate dehydrogenase 1 from Lactiplantibacillus plantarum (strain ATCC BAA-793 / NCIMB 8826 / WCFS1) (Lactobacillus plantarum).